Here is a 322-residue protein sequence, read N- to C-terminus: Acetyl-coenzyme A carboxylase carboxyl transferase subunit alpha (322 aa).

The 264-residue stretch at 30-293 (AVDISAEILR…KKALQDSLKL (264 aa)) folds into the CoA carboxyltransferase C-terminal domain.

Belongs to the AccA family. Acetyl-CoA carboxylase is a heterohexamer composed of biotin carboxyl carrier protein (AccB), biotin carboxylase (AccC) and two subunits each of ACCase subunit alpha (AccA) and ACCase subunit beta (AccD).

The protein resides in the cytoplasm. It catalyses the reaction N(6)-carboxybiotinyl-L-lysyl-[protein] + acetyl-CoA = N(6)-biotinyl-L-lysyl-[protein] + malonyl-CoA. Its pathway is lipid metabolism; malonyl-CoA biosynthesis; malonyl-CoA from acetyl-CoA: step 1/1. In terms of biological role, component of the acetyl coenzyme A carboxylase (ACC) complex. First, biotin carboxylase catalyzes the carboxylation of biotin on its carrier protein (BCCP) and then the CO(2) group is transferred by the carboxyltransferase to acetyl-CoA to form malonyl-CoA. This Nitrosospira multiformis (strain ATCC 25196 / NCIMB 11849 / C 71) protein is Acetyl-coenzyme A carboxylase carboxyl transferase subunit alpha.